Reading from the N-terminus, the 247-residue chain is Coproheme decarboxylase (247 aa).

Fe-coproporphyrin III is bound by residues Arg129, 143-147 (YPMDK), His170, Gln183, and Ser221. Tyr143 is an active-site residue.

This sequence belongs to the ChdC family. Type 1 subfamily. It depends on Fe-coproporphyrin III as a cofactor.

It catalyses the reaction Fe-coproporphyrin III + 2 H2O2 + 2 H(+) = heme b + 2 CO2 + 4 H2O. The catalysed reaction is Fe-coproporphyrin III + H2O2 + H(+) = harderoheme III + CO2 + 2 H2O. It carries out the reaction harderoheme III + H2O2 + H(+) = heme b + CO2 + 2 H2O. Its pathway is porphyrin-containing compound metabolism; protoheme biosynthesis. Functionally, involved in coproporphyrin-dependent heme b biosynthesis. Catalyzes the decarboxylation of Fe-coproporphyrin III (coproheme) to heme b (protoheme IX), the last step of the pathway. The reaction occurs in a stepwise manner with a three-propionate intermediate. The sequence is that of Coproheme decarboxylase from Bacillus cereus (strain ATCC 10987 / NRS 248).